The sequence spans 278 residues: Large ribosomal subunit protein uL2 (278 aa).

2 stretches are compositionally biased toward basic residues: residues 210–220 and 257–278; these read GRMRWKGKRPS and TRRKHKPSDKLIVRRRKSNKKR. The tract at residues 210 to 278 is disordered; the sequence is GRMRWKGKRP…VRRRKSNKKR (69 aa).

The protein belongs to the universal ribosomal protein uL2 family. As to quaternary structure, part of the 50S ribosomal subunit. Forms a bridge to the 30S subunit in the 70S ribosome.

Its function is as follows. One of the primary rRNA binding proteins. Required for association of the 30S and 50S subunits to form the 70S ribosome, for tRNA binding and peptide bond formation. It has been suggested to have peptidyltransferase activity; this is somewhat controversial. Makes several contacts with the 16S rRNA in the 70S ribosome. This chain is Large ribosomal subunit protein uL2, found in Acidothermus cellulolyticus (strain ATCC 43068 / DSM 8971 / 11B).